Consider the following 699-residue polypeptide: Kinesin-II 85 kDa subunit (699 aa).

The region spanning 10 to 342 (NVRVVVRCRP…LRYANRAKNI (333 aa)) is the Kinesin motor domain. 97-104 (GQTGTGKT) is a binding site for ATP. A coiled-coil region spans residues 341–619 (NIKNKAKINE…EDIGEWQLKC (279 aa)). 3 disordered regions span residues 369 to 415 (KQIS…LSPE), 432 to 456 (EEKK…ESEL), and 660 to 699 (GMKY…ALLQ). Residues 376 to 395 (EGLDDDEESGSEESGDEEAG) are compositionally biased toward acidic residues. Over residues 400 to 411 (KKKRKGKNPKRK) the composition is skewed to basic residues. Residues 620–699 (VAYTGNNMRK…MASSIDALLQ (80 aa)) are globular. A compositionally biased stretch (polar residues) spans 667–679 (QGKSGRPKTSSGR).

It belongs to the TRAFAC class myosin-kinesin ATPase superfamily. Kinesin family. Kinesin II subfamily. Heterotrimer of a 115 kDa subunit (KAP115) and two kinesin-like subunits of 95 kDa (KRP95) and 85 kDa (KRP85). Post-translationally, the N-terminus is blocked.

The protein resides in the cytoplasm. The protein localises to the cytoskeleton. The chain is Kinesin-II 85 kDa subunit (KRP85) from Strongylocentrotus purpuratus (Purple sea urchin).